A 240-amino-acid polypeptide reads, in one-letter code: Lactate utilization protein C (240 aa).

It belongs to the LutC/YkgG family.

In terms of biological role, is involved in L-lactate degradation and allows cells to grow with lactate as the sole carbon source. In Geobacillus kaustophilus (strain HTA426), this protein is Lactate utilization protein C.